The chain runs to 428 residues: Glutamate-1-semialdehyde 2,1-aminomutase 1 (428 aa).

At Lys-267 the chain carries N6-(pyridoxal phosphate)lysine.

Belongs to the class-III pyridoxal-phosphate-dependent aminotransferase family. HemL subfamily. Homodimer. The cofactor is pyridoxal 5'-phosphate.

Its subcellular location is the cytoplasm. It carries out the reaction (S)-4-amino-5-oxopentanoate = 5-aminolevulinate. It functions in the pathway porphyrin-containing compound metabolism; protoporphyrin-IX biosynthesis; 5-aminolevulinate from L-glutamyl-tRNA(Glu): step 2/2. In Staphylococcus aureus (strain Mu3 / ATCC 700698), this protein is Glutamate-1-semialdehyde 2,1-aminomutase 1.